Here is a 264-residue protein sequence, read N- to C-terminus: Zinc import ATP-binding protein ZnuC (264 aa).

Residues 20-235 (VQLKNIEVTF…PNFIHFFGDQ (216 aa)) form the ABC transporter domain. 52 to 59 (GPNGGGKS) contributes to the ATP binding site.

Belongs to the ABC transporter superfamily. Zinc importer (TC 3.A.1.15.5) family. In terms of assembly, the complex is composed of two ATP-binding proteins (ZnuC), two transmembrane proteins (ZnuB) and a solute-binding protein (ZnuA).

It localises to the cell inner membrane. It carries out the reaction Zn(2+)(out) + ATP(in) + H2O(in) = Zn(2+)(in) + ADP(in) + phosphate(in) + H(+)(in). Its function is as follows. Part of the ABC transporter complex ZnuABC involved in zinc import. Responsible for energy coupling to the transport system. The protein is Zinc import ATP-binding protein ZnuC of Haemophilus ducreyi (strain 35000HP / ATCC 700724).